The primary structure comprises 342 residues: Ribosomal RNA small subunit methyltransferase C (342 aa).

This sequence belongs to the methyltransferase superfamily. RsmC family. As to quaternary structure, monomer.

The protein localises to the cytoplasm. It catalyses the reaction guanosine(1207) in 16S rRNA + S-adenosyl-L-methionine = N(2)-methylguanosine(1207) in 16S rRNA + S-adenosyl-L-homocysteine + H(+). Its function is as follows. Specifically methylates the guanine in position 1207 of 16S rRNA in the 30S particle. In Shewanella oneidensis (strain ATCC 700550 / JCM 31522 / CIP 106686 / LMG 19005 / NCIMB 14063 / MR-1), this protein is Ribosomal RNA small subunit methyltransferase C.